A 629-amino-acid chain; its full sequence is Rho GTPase-activating protein conundrum (629 aa).

Residues 185 to 294 (PPKSGTYADI…CRDSSSLDSC (110 aa)) are required for interaction with Moe. A disordered region spans residues 237–261 (SIGRSKESRSENDARSQKKKSSEVL). The segment covering 240 to 258 (RSKESRSENDARSQKKKSS) has biased composition (basic and acidic residues). Positions 359–565 (VSINALIRRD…ILILRGEKLF (207 aa)) constitute a Rho-GAP domain.

As to quaternary structure, interacts with Moe (via FERM domain).

It is found in the cytoplasm. The protein resides in the cell membrane. It localises to the cell cortex. Its subcellular location is the cell junction. In terms of biological role, GTPase-activating protein (GAP) for Rho1; functions with the ERM protein Moe to regulate Rho1 and control proliferation in the developing epithelium. Recruited by Moe to the cell cortex where it negatively regulates Rho1 activity. Can also promote cell proliferation independently of its GAP activity, perhaps by acting with Arf6 to positively regulate Rac1. In Drosophila melanogaster (Fruit fly), this protein is Rho GTPase-activating protein conundrum.